A 390-amino-acid chain; its full sequence is Queuine tRNA-ribosyltransferase (390 aa).

The Proton acceptor role is filled by aspartate 92. Residues aspartate 92–phenylalanine 96, aspartate 146, glutamine 195, and glycine 222 contribute to the substrate site. Positions glycine 253 to aspartate 259 are RNA binding. Aspartate 272 serves as the catalytic Nucleophile. The interval threonine 277–arginine 281 is RNA binding; important for wobble base 34 recognition. Residues cysteine 310, cysteine 312, cysteine 315, and histidine 354 each contribute to the Zn(2+) site.

This sequence belongs to the queuine tRNA-ribosyltransferase family. As to quaternary structure, homodimer. Within each dimer, one monomer is responsible for RNA recognition and catalysis, while the other monomer binds to the replacement base PreQ1. The cofactor is Zn(2+).

It carries out the reaction 7-aminomethyl-7-carbaguanine + guanosine(34) in tRNA = 7-aminomethyl-7-carbaguanosine(34) in tRNA + guanine. It functions in the pathway tRNA modification; tRNA-queuosine biosynthesis. Its function is as follows. Catalyzes the base-exchange of a guanine (G) residue with the queuine precursor 7-aminomethyl-7-deazaguanine (PreQ1) at position 34 (anticodon wobble position) in tRNAs with GU(N) anticodons (tRNA-Asp, -Asn, -His and -Tyr). Catalysis occurs through a double-displacement mechanism. The nucleophile active site attacks the C1' of nucleotide 34 to detach the guanine base from the RNA, forming a covalent enzyme-RNA intermediate. The proton acceptor active site deprotonates the incoming PreQ1, allowing a nucleophilic attack on the C1' of the ribose to form the product. After dissociation, two additional enzymatic reactions on the tRNA convert PreQ1 to queuine (Q), resulting in the hypermodified nucleoside queuosine (7-(((4,5-cis-dihydroxy-2-cyclopenten-1-yl)amino)methyl)-7-deazaguanosine). The sequence is that of Queuine tRNA-ribosyltransferase from Acidovorax sp. (strain JS42).